Reading from the N-terminus, the 356-residue chain is CMP-sialic acid transporter 2 (356 aa).

The span at 1–24 shows a compositional bias: basic and acidic residues; it reads MEYRRVKDQESYDVVSQKDIESPG. Positions 1 to 44 are disordered; sequence MEYRRVKDQESYDVVSQKDIESPGERSLSSTSATSSLSTAGASK. The Cytoplasmic segment spans residues 1-52; it reads MEYRRVKDQESYDVVSQKDIESPGERSLSSTSATSSLSTAGASKGKNSWKLK. Residues 27-44 are compositionally biased toward low complexity; that stretch reads SLSSTSATSSLSTAGASK. A helical transmembrane segment spans residues 53 to 73; it reads SIVTLALTLLTSSQAILIVWS. The Lumenal segment spans residues 74 to 82; that stretch reads KRAGKYEYS. Residues 83–103 traverse the membrane as a helical segment; that stretch reads VTTANFSVEALKCLLSLIALY. The Cytoplasmic segment spans residues 104–125; sequence RTWNSQGVTEDNRLSTSFDEVS. Residues 126–146 form a helical membrane-spanning segment; that stretch reads VYPIPAILYMVKNLLQYYIFA. Topologically, residues 147 to 149 are lumenal; sequence YVD. The helical transmembrane segment at 150–172 threads the bilayer; the sequence is APAYQILKNLNIISTGVLYRIIL. Over 173–175 the chain is Cytoplasmic; sequence KKK. A helical membrane pass occupies residues 176-196; it reads LSEIQWAAFILLCAGCTTAQL. Residues 197–211 lie on the Lumenal side of the membrane; it reads NPSSDHVLQTPIQGW. A helical membrane pass occupies residues 212–232; that stretch reads VMAIVMALLSGFAGVYTEAII. Over 233-239 the chain is Cytoplasmic; it reads KKRPSRN. Residues 240–260 form a helical membrane-spanning segment; it reads INVQNFWLYIFGMLFNLVAIC. At 261 to 277 the chain is on the lumenal side; the sequence is VQDFDAVMNKGFFHGYS. Residues 278-298 form a helical membrane-spanning segment; the sequence is FITVLMILNHALSGIAVSMVM. Residues 299 to 314 lie on the Cytoplasmic side of the membrane; it reads KYADNIVKVYSTSVAM. A helical transmembrane segment spans residues 315 to 335; that stretch reads LLTAVVSVFLFGFHLSLAFFL. The Lumenal segment spans residues 336–356; the sequence is GSTVVSVSVYLHSVGKPQPQK.

The protein belongs to the nucleotide-sugar transporter family. CMP-Sialate:CMP antiporter (TC 2.A.7.12) subfamily. Expressed in roots, leaves and stalks.

Its subcellular location is the golgi apparatus membrane. Its function is as follows. Sugar transporter involved in the transport of CMP-sialic acid from the cytoplasm into the Golgi. May transport important nucleotide sugars such as CMP-Kdo (2-keto-3-deoxy-D-manno-octulosonic acid) in physiological conditions. The protein is CMP-sialic acid transporter 2 of Oryza sativa subsp. japonica (Rice).